A 178-amino-acid polypeptide reads, in one-letter code: Small ribosomal subunit protein uS4 (178 aa).

Positions 104-166 constitute an S4 RNA-binding domain; that stretch reads RRLQTIVYRK…PNSPMASENH (63 aa). The disordered stretch occupies residues 158–178; the sequence is NSPMASENHPERTAAVSEENQ.

Belongs to the universal ribosomal protein uS4 family. As to quaternary structure, part of the 30S ribosomal subunit. Contacts protein S5. The interaction surface between S4 and S5 is involved in control of translational fidelity.

Functionally, one of the primary rRNA binding proteins, it binds directly to 16S rRNA where it nucleates assembly of the body of the 30S subunit. In terms of biological role, with S5 and S12 plays an important role in translational accuracy. The polypeptide is Small ribosomal subunit protein uS4 (Methanococcus maripaludis (strain C5 / ATCC BAA-1333)).